Reading from the N-terminus, the 275-residue chain is Apoptosis inhibitor 1 (275 aa).

2 BIR repeats span residues 24 to 91 (LIER…CVYA) and 126 to 193 (PSAR…CYFV). Zn(2+) is bound by residues cysteine 163, cysteine 166, histidine 183, and cysteine 190. The RING-type zinc-finger motif lies at 227–263 (CKVCLERQRDAVLLPCRHFCVCMQCYFALDGKCPTCR).

In terms of biological role, acts by blocking cellular apoptosis rather than by preventing viral stimulation of apoptosis. This is Apoptosis inhibitor 1 (IAP1) from Orgyia pseudotsugata (Douglas-fir tussock moth).